A 257-amino-acid polypeptide reads, in one-letter code: Putative hydro-lyase Bcep18194_B2576 (257 aa).

It belongs to the D-glutamate cyclase family.

The protein is Putative hydro-lyase Bcep18194_B2576 of Burkholderia lata (strain ATCC 17760 / DSM 23089 / LMG 22485 / NCIMB 9086 / R18194 / 383).